Consider the following 555-residue polypeptide: CCR4-NOT transcription complex subunit 6-like (555 aa).

A required for interaction with CNOT1, CNOT3 and CNOT7 region spans residues 1-152 (MRLIGMPKEK…NLYQDPDGTR (152 aa)). LRR repeat units lie at residues 57-78 (HLTA…IAKL), 80-101 (NLVY…LGNM), 103-125 (SLRE…GRLF), and 126-148 (QLQT…YQDP). Residues 158 to 555 (MLDNLAVHPE…VNGVHLPNRR (398 aa)) form a nuclease domain region. Glu240 contacts Mg(2+). Residues Glu240, Glu276, His360, and Pro365 each contribute to the substrate site. A Mg(2+)-binding site is contributed by Asp410. Asp410 acts as the Proton donor/acceptor in catalysis. Positions 412, 479, and 484 each coordinate substrate.

Belongs to the CCR4/nocturin family. As to quaternary structure, component of the CCR4-NOT complex; distinct complexes seem to exist that differ in the participation of probably mutually exclusive catalytic subunits; the complex contains two deadenylase subunits, CNOT6 or CNOT6L, and CNOT7 or CNOT8. Interacts with CNOT1, CNOT3, CNOT7, CNOT8 and CNOT9. Interacts with TOB1. Interacts with NANOS2. Interacts with ZFP36. Interacts with ZFP36L2. Interacts with RBM46. Mg(2+) serves as cofactor. In terms of tissue distribution, highly expressed in placenta, skeletal muscle, pancreas, testis and leukocytes. Weakly expressed in heart, spleen and thymus.

The protein resides in the cytoplasm. It is found in the nucleus. The catalysed reaction is Exonucleolytic cleavage of poly(A) to 5'-AMP.. With respect to regulation, inhibited by free AMP, and with lesser efficiency also by CMP, GMP, UMP, ATP and neomycin. Has 3'-5' poly(A) exoribonuclease activity for synthetic poly(A) RNA substrate. Catalytic component of the CCR4-NOT complex which is one of the major cellular mRNA deadenylases and is linked to various cellular processes including bulk mRNA degradation, miRNA-mediated repression, translational repression during translational initiation and general transcription regulation. Additional complex functions may be a consequence of its influence on mRNA expression. May be involved in the deadenylation-dependent degradation of mRNAs through the 3'-UTR AU-rich element-mediated mechanism. Involved in deadenylation-dependent degradation of CDKN1B mRNA. Its mRNA deadenylase activity can be inhibited by TOB1. Mediates cell proliferation and cell survival and prevents cellular senescence. The polypeptide is CCR4-NOT transcription complex subunit 6-like (CNOT6L) (Homo sapiens (Human)).